The sequence spans 138 residues: Ribulose bisphosphate carboxylase small subunit (138 aa).

Belongs to the RuBisCO small chain family. As to quaternary structure, heterohexadecamer of 8 large and 8 small subunits.

The protein resides in the plastid. Its subcellular location is the chloroplast. RuBisCO catalyzes two reactions: the carboxylation of D-ribulose 1,5-bisphosphate, the primary event in carbon dioxide fixation, as well as the oxidative fragmentation of the pentose substrate in the photorespiration process. Both reactions occur simultaneously and in competition at the same active site. Although the small subunit is not catalytic it is essential for maximal activity. The polypeptide is Ribulose bisphosphate carboxylase small subunit (Pyropia haitanensis (Red seaweed)).